The sequence spans 234 residues: Purine nucleoside phosphorylase DeoD-type (234 aa).

H4 provides a ligand contact to a purine D-ribonucleoside. Residues G20, R24, R43, and 87 to 90 each bind phosphate; that span reads RVGT. A purine D-ribonucleoside contacts are provided by residues E162, 178–180, and 202–203; these read EME and SD. D203 (proton donor) is an active-site residue.

The protein belongs to the PNP/UDP phosphorylase family. In terms of assembly, homohexamer; trimer of homodimers.

The enzyme catalyses a purine D-ribonucleoside + phosphate = a purine nucleobase + alpha-D-ribose 1-phosphate. The catalysed reaction is a purine 2'-deoxy-D-ribonucleoside + phosphate = a purine nucleobase + 2-deoxy-alpha-D-ribose 1-phosphate. Its function is as follows. Catalyzes the reversible phosphorolytic breakdown of the N-glycosidic bond in the beta-(deoxy)ribonucleoside molecules, with the formation of the corresponding free purine bases and pentose-1-phosphate. Functionally, cleavage of adenosine and its derivatives. This chain is Purine nucleoside phosphorylase DeoD-type, found in Geobacillus stearothermophilus (Bacillus stearothermophilus).